The following is a 78-amino-acid chain: Ferredoxin oxidoreductase 2 subunit ForD (78 aa).

2 consecutive 4Fe-4S ferredoxin-type domains span residues 3–35 and 37–66; these read FVAD…FKAS and NSAW…HCIE. Positions 12, 17, 20, 24, 46, 49, 52, and 56 each coordinate [4Fe-4S] cluster.

In terms of assembly, heterotetramer of one alpha, one beta, one delta and one gamma chain. Requires [4Fe-4S] cluster as cofactor.

This chain is Ferredoxin oxidoreductase 2 subunit ForD (forD2), found in Aquifex aeolicus (strain VF5).